A 367-amino-acid polypeptide reads, in one-letter code: Sulfate/thiosulfate import ATP-binding protein CysA 2 (367 aa).

The ABC transporter domain maps to 3 to 237 (VRVQNIRKEF…PVSPFVYGFI (235 aa)). 35 to 42 (GPSGSGKT) lines the ATP pocket.

Belongs to the ABC transporter superfamily. Sulfate/tungstate importer (TC 3.A.1.6) family. The complex is composed of two ATP-binding proteins (CysA), two transmembrane proteins (CysT and CysW) and a solute-binding protein (CysP).

The protein resides in the cell inner membrane. It carries out the reaction sulfate(out) + ATP + H2O = sulfate(in) + ADP + phosphate + H(+). The catalysed reaction is thiosulfate(out) + ATP + H2O = thiosulfate(in) + ADP + phosphate + H(+). Its function is as follows. Part of the ABC transporter complex CysAWTP involved in sulfate/thiosulfate import. Responsible for energy coupling to the transport system. In Rhizobium meliloti (strain 1021) (Ensifer meliloti), this protein is Sulfate/thiosulfate import ATP-binding protein CysA 2.